A 225-amino-acid chain; its full sequence is Insulin-induced gene 2 protein (225 aa).

The Cytoplasmic portion of the chain corresponds to 1-28 (MAEGETESPGPKKCGPYISSVTSQSVNL). Residues 29–51 (MIRGVVLFFIGVFLALVLNLLQI) form a helical membrane-spanning segment. Over 52–70 (QRNVTLFPPDVIASIFSSA) the chain is Lumenal. The chain crosses the membrane as a helical span at residues 71-88 (WWVPPCCGTASAVIGLLY). Residues 89 to 103 (PCIDRHLGEPHKFKR) are Cytoplasmic-facing. A helical membrane pass occupies residues 104–126 (EWSSVMRCVAVFVGINHASAKVD). Residues 127 to 129 (FDN) are Lumenal-facing. The chain crosses the membrane as a helical span at residues 130–148 (NIQLSLTLAALSIGLWWTF). At 149–153 (DRSRS) the chain is on the cytoplasmic side. The residue at position 151 (serine 151) is a Phosphoserine; by PCK1. The helical transmembrane segment at 154–175 (GFGLGVGIAFLATVVTQLLVYN) threads the bilayer. Residues 176–189 (GVYQYTSPDFLYVR) lie on the Lumenal side of the membrane. Residues 190 to 207 (SWLPCIFFAGGITMGNIG) traverse the membrane as a helical segment. Residues 208 to 225 (RQLAMYECKVIAEKSHQE) are Cytoplasmic-facing. Cysteine 215 carries the cysteine sulfenic acid (-SOH); alternate modification. A Glycyl cysteine thioester (Cys-Gly) (interchain with G-Cter in ubiquitin); alternate cross-link involves residue cysteine 215. Positions 219 to 225 (AEKSHQE) match the KxHxx motif.

It belongs to the INSIG family. In terms of assembly, interacts with SCAP; interaction is direct and only takes place in the presence of sterols; it prevents interaction between SCAP and the coat protein complex II (COPII). Associates with the SCAP-SREBP complex (composed of SCAP and SREBF1/SREBP1 or SREBF2/SREBP2); association is mediated via its interaction with SCAP and only takes place in the presence of sterols. Interacts with RNF139. Interacts with RNF145. Post-translationally, phosphorylation at Ser-151 by PCK1 reduces binding to oxysterol, disrupting the interaction between INSIG2 and SCAP, thereby promoting nuclear translocation of SREBP proteins (SREBF1/SREBP1 or SREBF2/SREBP2) and subsequent transcription of downstream lipogenesis-related genes. Polyubiquitinated by AMFR/gp78 at Cys-215 in some tissues such as adipose tissues, undifferentiated myoblasts and liver, leading to its degradation. In differentiated myotubes, Cys-215 oxidation prevents ubiquitination at the same site, resulting in protein stabilization. In terms of processing, oxidized at Cys-215 in differentiated myotubes, preventing ubiquitination at the same site, and resulting in protein stabilization.

The protein localises to the endoplasmic reticulum membrane. Oxysterol-binding protein that mediates feedback control of cholesterol synthesis by controlling both endoplasmic reticulum to Golgi transport of SCAP and degradation of HMGCR. Acts as a negative regulator of cholesterol biosynthesis by mediating the retention of the SCAP-SREBP complex in the endoplasmic reticulum, thereby blocking the processing of sterol regulatory element-binding proteins (SREBPs) SREBF1/SREBP1 and SREBF2/SREBP2. Binds oxysterol, including 22-hydroxycholesterol, 24-hydroxycholesterol, 25-hydroxycholesterol and 27-hydroxycholesterol, regulating interaction with SCAP and retention of the SCAP-SREBP complex in the endoplasmic reticulum. In presence of oxysterol, interacts with SCAP, retaining the SCAP-SREBP complex in the endoplasmic reticulum, thereby preventing SCAP from escorting SREBF1/SREBP1 and SREBF2/SREBP2 to the Golgi. Sterol deprivation or phosphorylation by PCK1 reduce oxysterol-binding, disrupting the interaction between INSIG2 and SCAP, thereby promoting Golgi transport of the SCAP-SREBP complex, followed by processing and nuclear translocation of SREBF1/SREBP1 and SREBF2/SREBP2. Also regulates cholesterol synthesis by regulating degradation of HMGCR: initiates the sterol-mediated ubiquitin-mediated endoplasmic reticulum-associated degradation (ERAD) of HMGCR via recruitment of the reductase to the ubiquitin ligase RNF139. The polypeptide is Insulin-induced gene 2 protein (Homo sapiens (Human)).